The following is a 172-amino-acid chain: 3-hydroxydecanoyl-[acyl-carrier-protein] dehydratase (172 aa).

His71 is a catalytic residue.

Belongs to the thioester dehydratase family. FabA subfamily. In terms of assembly, homodimer.

It localises to the cytoplasm. The enzyme catalyses a (3R)-hydroxyacyl-[ACP] = a (2E)-enoyl-[ACP] + H2O. It catalyses the reaction (3R)-hydroxydecanoyl-[ACP] = (2E)-decenoyl-[ACP] + H2O. The catalysed reaction is (2E)-decenoyl-[ACP] = (3Z)-decenoyl-[ACP]. The protein operates within lipid metabolism; fatty acid biosynthesis. In terms of biological role, necessary for the introduction of cis unsaturation into fatty acids. Catalyzes the dehydration of (3R)-3-hydroxydecanoyl-ACP to E-(2)-decenoyl-ACP and then its isomerization to Z-(3)-decenoyl-ACP. Can catalyze the dehydratase reaction for beta-hydroxyacyl-ACPs with saturated chain lengths up to 16:0, being most active on intermediate chain length. This is 3-hydroxydecanoyl-[acyl-carrier-protein] dehydratase from Pectobacterium carotovorum subsp. carotovorum (strain PC1).